Consider the following 443-residue polypeptide: Tol-Pal system protein TolB (443 aa).

The signal sequence occupies residues 1–33 (MKIGIINTKIRTVFSAFACMIAASLVCTMPARA).

This sequence belongs to the TolB family. The Tol-Pal system is composed of five core proteins: the inner membrane proteins TolA, TolQ and TolR, the periplasmic protein TolB and the outer membrane protein Pal. They form a network linking the inner and outer membranes and the peptidoglycan layer.

The protein localises to the periplasm. Part of the Tol-Pal system, which plays a role in outer membrane invagination during cell division and is important for maintaining outer membrane integrity. The chain is Tol-Pal system protein TolB from Brucella suis (strain ATCC 23445 / NCTC 10510).